We begin with the raw amino-acid sequence, 366 residues long: Chorismate synthase (366 aa).

NADP(+) is bound by residues Arg-48 and Arg-54. Residues Arg-132 to Ser-134, Asn-244 to Ala-245, Gly-289, Lys-304 to Ser-308, and Arg-330 each bind FMN.

This sequence belongs to the chorismate synthase family. Homotetramer. Requires FMNH2 as cofactor.

It carries out the reaction 5-O-(1-carboxyvinyl)-3-phosphoshikimate = chorismate + phosphate. It participates in metabolic intermediate biosynthesis; chorismate biosynthesis; chorismate from D-erythrose 4-phosphate and phosphoenolpyruvate: step 7/7. Functionally, catalyzes the anti-1,4-elimination of the C-3 phosphate and the C-6 proR hydrogen from 5-enolpyruvylshikimate-3-phosphate (EPSP) to yield chorismate, which is the branch point compound that serves as the starting substrate for the three terminal pathways of aromatic amino acid biosynthesis. This reaction introduces a second double bond into the aromatic ring system. The protein is Chorismate synthase of Methylorubrum extorquens (strain PA1) (Methylobacterium extorquens).